The chain runs to 231 residues: Phosphoglycolate phosphatase (231 aa).

The Nucleophile role is filled by Asp9. Residues Asp9 and Asp11 each contribute to the Mg(2+) site. Residue Lys154 coordinates substrate. Mg(2+) contacts are provided by Asp177 and Asp181.

It belongs to the archaeal SPP-like hydrolase family. Requires Mg(2+) as cofactor.

It catalyses the reaction 2-phosphoglycolate + H2O = glycolate + phosphate. Catalyzes the dephosphorylation of 2-phosphoglycolate. This is Phosphoglycolate phosphatase from Pyrococcus furiosus (strain ATCC 43587 / DSM 3638 / JCM 8422 / Vc1).